The sequence spans 76 residues: Large ribosomal subunit protein bL31 (76 aa).

It belongs to the bacterial ribosomal protein bL31 family. Type A subfamily. Part of the 50S ribosomal subunit.

Binds the 23S rRNA. The protein is Large ribosomal subunit protein bL31 of Rhizorhabdus wittichii (strain DSM 6014 / CCUG 31198 / JCM 15750 / NBRC 105917 / EY 4224 / RW1) (Sphingomonas wittichii).